Consider the following 293-residue polypeptide: MATH domain and coiled-coil domain-containing protein At3g58400 (293 aa).

Positions R3 to I126 constitute an MATH domain. Residues K227–A285 adopt a coiled-coil conformation.

This Arabidopsis thaliana (Mouse-ear cress) protein is MATH domain and coiled-coil domain-containing protein At3g58400.